The following is a 176-amino-acid chain: Nucleoside triphosphate/diphosphate phosphatase (176 aa).

Arginine 23 (proton donor) is an active-site residue. Mg(2+) is bound by residues asparagine 87, aspartate 103, aspartate 105, aspartate 107, aspartate 120, and glutamate 123.

The protein belongs to the Ntdp family. Mg(2+) serves as cofactor.

The enzyme catalyses a ribonucleoside 5'-triphosphate + H2O = a ribonucleoside 5'-diphosphate + phosphate + H(+). It carries out the reaction a ribonucleoside 5'-diphosphate + H2O = a ribonucleoside 5'-phosphate + phosphate + H(+). In terms of biological role, has nucleoside phosphatase activity towards nucleoside triphosphates and nucleoside diphosphates. This Lactococcus lactis subsp. lactis (strain IL1403) (Streptococcus lactis) protein is Nucleoside triphosphate/diphosphate phosphatase (yjjG).